We begin with the raw amino-acid sequence, 168 residues long: tRNA (cytidine(56)-2'-O)-methyltransferase (168 aa).

S-adenosyl-L-methionine is bound by residues Leu79 and 104–108; that span reads GAEKV.

This sequence belongs to the aTrm56 family. Homodimer.

It localises to the cytoplasm. The enzyme catalyses cytidine(56) in tRNA + S-adenosyl-L-methionine = 2'-O-methylcytidine(56) in tRNA + S-adenosyl-L-homocysteine + H(+). In terms of biological role, specifically catalyzes the AdoMet-dependent 2'-O-ribose methylation of cytidine at position 56 in tRNAs. The chain is tRNA (cytidine(56)-2'-O)-methyltransferase from Archaeoglobus fulgidus (strain ATCC 49558 / DSM 4304 / JCM 9628 / NBRC 100126 / VC-16).